Reading from the N-terminus, the 109-residue chain is uncharacterized protein (109 aa).

An HTH hxlR-type domain is found at 10–109; it reads APFEYTLSLI…WGMAQGGPHM (100 aa).

This is an uncharacterized protein from Bacillus subtilis (strain 168).